The following is a 424-amino-acid chain: Elongation factor 1-alpha (424 aa).

A tr-type G domain is found at Lys5–Val223. The tract at residues Gly14–Ser21 is G1. Gly14–Ser21 lines the GTP pocket. Ser21 contacts Mg(2+). The segment at Gly70–Asp74 is G2. The segment at Asp91–Gly94 is G3. Residues Asp91–His95 and Asn146–Asp149 each bind GTP. The interval Asn146–Asp149 is G4. Residues Ser187–Tyr189 form a G5 region.

The protein belongs to the TRAFAC class translation factor GTPase superfamily. Classic translation factor GTPase family. EF-Tu/EF-1A subfamily.

It localises to the cytoplasm. It catalyses the reaction GTP + H2O = GDP + phosphate + H(+). Its function is as follows. GTP hydrolase that promotes the GTP-dependent binding of aminoacyl-tRNA to the A-site of ribosomes during protein biosynthesis. This is Elongation factor 1-alpha from Methanothrix thermoacetophila (strain DSM 6194 / JCM 14653 / NBRC 101360 / PT) (Methanosaeta thermophila).